We begin with the raw amino-acid sequence, 354 residues long: Muscleblind-like protein 3 (354 aa).

4 C3H1-type zinc fingers span residues 14–42, 48–74, 174–202, and 210–236; these read WLTL…HPPR, NGRV…HPPP, SDKL…HPTD, and DNTV…HPPA.

The protein belongs to the muscleblind family. Highly expressed in the placenta.

The protein localises to the nucleus. The protein resides in the cytoplasm. Its function is as follows. Mediates pre-mRNA alternative splicing regulation. Acts either as activator or repressor of splicing on specific pre-mRNA targets. Inhibits cardiac troponin-T (TNNT2) pre-mRNA exon inclusion but induces insulin receptor (IR) pre-mRNA exon inclusion in muscle. Antagonizes the alternative splicing activity pattern of CELF proteins. May play a role in myotonic dystrophy pathophysiology (DM). Could inhibit terminal muscle differentiation, acting at approximately the time of myogenin induction. This is Muscleblind-like protein 3 (MBNL3) from Homo sapiens (Human).